The following is a 119-amino-acid chain: Holo-[acyl-carrier-protein] synthase (119 aa).

The Mg(2+) site is built by aspartate 7 and glutamate 53.

Belongs to the P-Pant transferase superfamily. AcpS family. It depends on Mg(2+) as a cofactor.

It is found in the cytoplasm. It catalyses the reaction apo-[ACP] + CoA = holo-[ACP] + adenosine 3',5'-bisphosphate + H(+). Its function is as follows. Transfers the 4'-phosphopantetheine moiety from coenzyme A to a Ser of acyl-carrier-protein. In Dehalococcoides mccartyi (strain ATCC BAA-2266 / KCTC 15142 / 195) (Dehalococcoides ethenogenes (strain 195)), this protein is Holo-[acyl-carrier-protein] synthase.